The following is a 244-amino-acid chain: ATP synthase subunit a, chloroplastic (244 aa).

Transmembrane regions (helical) follow at residues 35–55 (QVLI…VIAV), 92–112 (VPFI…GALL), 131–151 (INTT…AGLS), 196–216 (LVVV…VMFL), and 217–237 (GLFT…AYIG).

Belongs to the ATPase A chain family. In terms of assembly, F-type ATPases have 2 components, CF(1) - the catalytic core - and CF(0) - the membrane proton channel. CF(1) has five subunits: alpha(3), beta(3), gamma(1), delta(1), epsilon(1). CF(0) has four main subunits: a, b, b' and c.

It is found in the plastid. Its subcellular location is the chloroplast thylakoid membrane. Key component of the proton channel; it plays a direct role in the translocation of protons across the membrane. This Gossypium hirsutum (Upland cotton) protein is ATP synthase subunit a, chloroplastic.